Here is a 482-residue protein sequence, read N- to C-terminus: uncharacterized protein (482 aa).

12 helical membrane-spanning segments follow: residues 40–57 (LDWYLMPMFSVLYFLSFL), 83–103 (AAVSVFYATYITAETPSVLLV), 109–129 (HYYLSAMIIGWSLVTIFTCFV), 140–160 (LLLGICEGGFFPCLSLYISMT), 170–190 (LAYLYVCSCFSGAFGGLIATG), 205–225 (WLYIIEGLISAISALWILFCL), 278–298 (VIQFCQDLVLYGISTFLPSIL), 311–331 (YMSVPVYALGGISVYVICLLS), 338–358 (GWFIIGMNFFGLAGFIILLAT), 366–386 (VATYLIALPLYPTVALNITWI), 399–418 (ALGCNQTIGNLAGVIAGQVY), and 428–448 (GFALGCTVVGTLTATAMRFYL).

The protein belongs to the major facilitator superfamily. Allantoate permease family.

The protein localises to the endoplasmic reticulum. It localises to the membrane. This is an uncharacterized protein from Schizosaccharomyces pombe (strain 972 / ATCC 24843) (Fission yeast).